We begin with the raw amino-acid sequence, 207 residues long: BON1-associated protein 2 (207 aa).

In terms of domain architecture, C2 spans 1–112 (MSYSTFKRSL…GFAPQGHLNF (112 aa)).

Interacts with BON1, BON2 and BON3. Expressed in roots, leaves, stems and flowers.

The protein resides in the membrane. Negative regulator of cell death and defense responses. Exhibits calcium-dependent phospholipid binding properties. The chain is BON1-associated protein 2 (BAP2) from Arabidopsis thaliana (Mouse-ear cress).